A 561-amino-acid polypeptide reads, in one-letter code: Asparagine synthetase [glutamine-hydrolyzing] (561 aa).

The active-site For GATase activity is Cys2. The Glutamine amidotransferase type-2 domain occupies 2–191; it reads CGIWALFGSD…PGHYEVLDLK (190 aa). Residues 49–53, 75–77, and Asp97 each bind L-glutamine; these read RLAVV and NGE. Positions 213–536 constitute an Asparagine synthetase domain; it reads HALYDGVEKL…PGRADWLPHY (324 aa). ATP is bound by residues Leu256, Ile288, and 363–364; that span reads SG. Position 385 is an N6-acetyllysine (Lys385). A Phosphothreonine modification is found at Thr545.

It catalyses the reaction L-aspartate + L-glutamine + ATP + H2O = L-asparagine + L-glutamate + AMP + diphosphate + H(+). Its pathway is amino-acid biosynthesis; L-asparagine biosynthesis; L-asparagine from L-aspartate (L-Gln route): step 1/1. This chain is Asparagine synthetase [glutamine-hydrolyzing] (ASNS), found in Bos taurus (Bovine).